Here is a 226-residue protein sequence, read N- to C-terminus: UPF0758 protein SGO_1229 (226 aa).

The MPN domain occupies 103-225 (RILSSQKLAK…YYSYREETDL (123 aa)). Zn(2+) contacts are provided by H174, H176, and D187. Positions 174-187 (HNHPSGATRPSRDD) match the JAMM motif motif.

It belongs to the UPF0758 family.

This is UPF0758 protein SGO_1229 from Streptococcus gordonii (strain Challis / ATCC 35105 / BCRC 15272 / CH1 / DL1 / V288).